Here is a 379-residue protein sequence, read N- to C-terminus: Putative 8-amino-7-oxononanoate synthase (379 aa).

Position 21 (arginine 21) interacts with substrate. 97 to 98 is a binding site for pyridoxal 5'-phosphate; sequence GY. Residue histidine 122 participates in substrate binding. Pyridoxal 5'-phosphate is bound by residues serine 169, 194 to 197, and 223 to 226; these read DDAH and TLSK. Residue lysine 226 is modified to N6-(pyridoxal phosphate)lysine. Threonine 340 contacts substrate.

This sequence belongs to the class-II pyridoxal-phosphate-dependent aminotransferase family. BioF subfamily. In terms of assembly, homodimer. The cofactor is pyridoxal 5'-phosphate.

It carries out the reaction 6-carboxyhexanoyl-[ACP] + L-alanine + H(+) = (8S)-8-amino-7-oxononanoate + holo-[ACP] + CO2. It functions in the pathway cofactor biosynthesis; biotin biosynthesis. Functionally, catalyzes the decarboxylative condensation of pimeloyl-[acyl-carrier protein] and L-alanine to produce 8-amino-7-oxononanoate (AON), [acyl-carrier protein], and carbon dioxide. The chain is Putative 8-amino-7-oxononanoate synthase (bioF) from Bacillus licheniformis (strain ATCC 14580 / DSM 13 / JCM 2505 / CCUG 7422 / NBRC 12200 / NCIMB 9375 / NCTC 10341 / NRRL NRS-1264 / Gibson 46).